The chain runs to 425 residues: Terminal nucleotidyltransferase 5B (425 aa).

The interval 1–42 (MMPSESGAERRDRAAAQVGTAAATAVATAAPAGGGPDPEALS) is disordered. Over residues 15 to 31 (AAQVGTAAATAVATAAP) the composition is skewed to low complexity.

The protein belongs to the TENT family.

It localises to the cytoplasm. The protein localises to the nucleus. It catalyses the reaction RNA(n) + ATP = RNA(n)-3'-adenine ribonucleotide + diphosphate. Catalyzes the transfer of one adenosine molecule from an ATP to an mRNA poly(A) tail bearing a 3'-OH terminal group in an ATP hydrolysis-dependent manner. May be involved in maintaining the translation efficiency of at least some genes through preventing degradation of their mRNAs. Prefers RNA molecules that are adenosine-rich close to 3'-end. In addition, may inhibit cell proliferation and cell cycle progression through ubiquitination of beta-catenin/CTNNB1. This is Terminal nucleotidyltransferase 5B from Homo sapiens (Human).